Reading from the N-terminus, the 311-residue chain is Malate dehydrogenase (311 aa).

NAD(+) is bound by residues 7-13 (GAAGGIG) and Asp34. Residues Arg81 and Arg87 each coordinate substrate. Residues Asn94 and 117-119 (ITN) contribute to the NAD(+) site. Substrate-binding residues include Asn119 and Arg153. Residue His177 is the Proton acceptor of the active site. An NAD(+)-binding site is contributed by Met227.

This sequence belongs to the LDH/MDH superfamily. MDH type 1 family. Homodimer.

It carries out the reaction (S)-malate + NAD(+) = oxaloacetate + NADH + H(+). Catalyzes the reversible oxidation of malate to oxaloacetate. In Shewanella amazonensis (strain ATCC BAA-1098 / SB2B), this protein is Malate dehydrogenase.